The following is a 319-amino-acid chain: Acetyl esterase (319 aa).

The Involved in the stabilization of the negatively charged intermediate by the formation of the oxyanion hole motif lies at 91-93 (HGG). Active-site residues include Ser-165, Asp-262, and His-292.

This sequence belongs to the 'GDXG' lipolytic enzyme family. In terms of assembly, homodimer. Interacts with MalT and MelA.

It localises to the cytoplasm. Displays esterase activity towards short chain fatty esters (acyl chain length of up to 8 carbons). Able to hydrolyze triacetylglycerol (triacetin) and tributyrylglycerol (tributyrin), but not trioleylglycerol (triolein) or cholesterol oleate. Negatively regulates MalT activity by antagonizing maltotriose binding. Inhibits MelA galactosidase activity. This is Acetyl esterase from Escherichia coli O6:H1 (strain CFT073 / ATCC 700928 / UPEC).